The chain runs to 366 residues: MATIIKNGKRWHAQVRKFGVSKSAIFLTQADAKKWAEMLEKQLESGKYNEIPDITLDELIDKYLKEVTVTKRGKREERIRLLRLSRTPLAAISLQEIGKAHFREWRNQRLKEVSPTTVLRERSSLSALMAKTIEWDFITENPLKYLEKPKAPAPRTRRYNEHEIERLIFVSGYDVEHIEPPKTLQNCTGAAFLFAIETAMRAGEIASLTWNNINFEKRTTFLPITKNGHSRTVPLSVKAIEILQHLTSVKTESDPRVFQMEARQLDHNFRKLKKMEGLENANLHFHDTRRERLAEKVDVMVLAKISGHRDLSILQNTYYAPDMAEGYKTKAGYDLTPTKGLSQRNFFFFNENFIVFTTNPPIVIKL.

Positions 54–133 (ITLDELIDKY…SLSALMAKTI (80 aa)) constitute a Core-binding (CB) domain. The Tyr recombinase domain maps to 168–331 (IFVSGYDVEH…DMAEGYKTKA (164 aa)). Catalysis depends on residues R201, K226, and H308. The O-(3'-phospho-DNA)-tyrosine intermediate role is filled by Y318.

It belongs to the 'phage' integrase family.

The polypeptide is Putative integrase/recombinase HI_1572 (Haemophilus influenzae (strain ATCC 51907 / DSM 11121 / KW20 / Rd)).